Here is a 1547-residue protein sequence, read N- to C-terminus: DNA topoisomerase 2 (1547 aa).

Residues phenylalanine 8–glycine 30 form a disordered region. Positions asparagine 9 to threonine 19 are enriched in polar residues. Residues asparagine 99, asparagine 128, serine 156–asparagine 158, and glycine 169–lysine 176 contribute to the ATP site. Residues lysine 351 to lysine 353 form an interaction with DNA region. Glutamine 385–lysine 387 contacts ATP. Residues cysteine 463–glutamate 580 enclose the Toprim domain. Positions 469, 549, and 551 each coordinate Mg(2+). The region spanning isoleucine 723–leucine 1192 is the Topo IIA-type catalytic domain. Catalysis depends on tyrosine 813, which acts as the O-(5'-phospho-DNA)-tyrosine intermediate. The interval lysine 996 to cysteine 1005 is interaction with DNA. 4 disordered regions span residues threonine 1107–aspartate 1134, glutamate 1209–aspartate 1249, lysine 1261–aspartate 1423, and arginine 1459–aspartate 1547. Residues leucine 1109–glutamate 1123 are compositionally biased toward acidic residues. Basic and acidic residues predominate over residues proline 1124–aspartate 1134. The span at lysine 1216 to lysine 1228 shows a compositional bias: basic residues. Basic and acidic residues-rich tracts occupy residues asparagine 1238–aspartate 1249 and glutamate 1294–lysine 1315. The span at threonine 1331–aspartate 1344 shows a compositional bias: low complexity. Acidic residues predominate over residues aspartate 1373–leucine 1383. Basic and acidic residues-rich tracts occupy residues leucine 1384–alanine 1394 and arginine 1459–lysine 1488. Positions lysine 1513–lysine 1528 are enriched in basic residues. Over residues aspartate 1537–aspartate 1547 the composition is skewed to polar residues.

The protein belongs to the type II topoisomerase family. Homodimer. It depends on Mg(2+) as a cofactor. The cofactor is Mn(2+). Ca(2+) is required as a cofactor.

The protein resides in the nucleus. It catalyses the reaction ATP-dependent breakage, passage and rejoining of double-stranded DNA.. Functionally, control of topological states of DNA by transient breakage and subsequent rejoining of DNA strands. Topoisomerase II makes double-strand breaks. The protein is DNA topoisomerase 2 (TOP2) of Bombyx mori (Silk moth).